The sequence spans 224 residues: Cytidylate kinase (224 aa).

11–19 (GPAAAGKST) is a binding site for ATP.

This sequence belongs to the cytidylate kinase family. Type 1 subfamily.

Its subcellular location is the cytoplasm. The enzyme catalyses CMP + ATP = CDP + ADP. It catalyses the reaction dCMP + ATP = dCDP + ADP. This is Cytidylate kinase from Listeria monocytogenes serotype 4a (strain HCC23).